The following is a 586-amino-acid chain: Lipoprotein LpqB (586 aa).

The signal sequence occupies residues methionine 1–glycine 17. Cysteine 18 carries N-palmitoyl cysteine lipidation. Cysteine 18 is lipidated: S-diacylglycerol cysteine. The segment at alanine 26–isoleucine 45 is disordered.

Belongs to the LpqB lipoprotein family.

Its subcellular location is the cell membrane. This Mycobacterium ulcerans (strain Agy99) protein is Lipoprotein LpqB.